The following is a 119-amino-acid chain: NADH-quinone oxidoreductase subunit A (119 aa).

Helical transmembrane passes span 7–27 (FPVL…MTIG), 63–83 (LIAI…PWGV), and 88–108 (IGWP…VGFV).

The protein belongs to the complex I subunit 3 family. NDH-1 is composed of 14 different subunits. Subunits NuoA, H, J, K, L, M, N constitute the membrane sector of the complex.

Its subcellular location is the cell inner membrane. The enzyme catalyses a quinone + NADH + 5 H(+)(in) = a quinol + NAD(+) + 4 H(+)(out). NDH-1 shuttles electrons from NADH, via FMN and iron-sulfur (Fe-S) centers, to quinones in the respiratory chain. The immediate electron acceptor for the enzyme in this species is believed to be ubiquinone. Couples the redox reaction to proton translocation (for every two electrons transferred, four hydrogen ions are translocated across the cytoplasmic membrane), and thus conserves the redox energy in a proton gradient. The protein is NADH-quinone oxidoreductase subunit A of Ralstonia nicotianae (strain ATCC BAA-1114 / GMI1000) (Ralstonia solanacearum).